The sequence spans 163 residues: Globin CTT-V (163 aa).

The signal sequence occupies residues 1 to 16 (MKFFAVLTLCIIGAIA). The Globin domain maps to 18-163 (PLTSDEANLV…YTVAFEVIPA (146 aa)). Heme b is bound by residues H76 and H111.

It belongs to the globin family.

The protein is Globin CTT-V (CTT-V) of Chironomus thummi piger (Midge).